The sequence spans 274 residues: Rhamnulose-1-phosphate aldolase (274 aa).

Glu117 is a catalytic residue. Zn(2+) is bound by residues His141, His143, and His212.

This sequence belongs to the aldolase class II family. RhaD subfamily. Homotetramer. It depends on Zn(2+) as a cofactor.

The protein localises to the cytoplasm. The enzyme catalyses L-rhamnulose 1-phosphate = (S)-lactaldehyde + dihydroxyacetone phosphate. The protein operates within carbohydrate degradation; L-rhamnose degradation; glycerone phosphate from L-rhamnose: step 3/3. Its function is as follows. Catalyzes the reversible cleavage of L-rhamnulose-1-phosphate to dihydroxyacetone phosphate (DHAP) and L-lactaldehyde. The sequence is that of Rhamnulose-1-phosphate aldolase from Pectobacterium atrosepticum (strain SCRI 1043 / ATCC BAA-672) (Erwinia carotovora subsp. atroseptica).